A 429-amino-acid polypeptide reads, in one-letter code: Nucleotide exchange factor Sil1 (429 aa).

An N-terminal signal peptide occupies residues 1-24 (MSGKQVVILLGSVLILGCLQVAAA). An N-linked (GlcNAc...) asparagine glycan is attached at Asn-29. A disordered region spans residues 70 to 98 (DESERGTSLQSQPDDQNARESHDDNEPLA). Residues 75 to 84 (GTSLQSQPDD) are compositionally biased toward polar residues. The span at 85–94 (QNARESHDDN) shows a compositional bias: basic and acidic residues. A coiled-coil region spans residues 104-135 (DIIEESIRRVKEQKKSYAELRKAYKEFQKNFR). N-linked (GlcNAc...) asparagine glycans are attached at residues Asn-150, Asn-199, and Asn-400. Residues 426–429 (HTEL) carry the Prevents secretion from ER motif.

The protein belongs to the SIL1 family.

The protein resides in the endoplasmic reticulum lumen. In terms of biological role, required for protein translocation and folding in the endoplasmic reticulum (ER). Functions as a nucleotide exchange factor for an ER lumenal chaperone of HSP70 family. The sequence is that of Nucleotide exchange factor Sil1 from Drosophila melanogaster (Fruit fly).